A 482-amino-acid chain; its full sequence is Kynurenine 3-monooxygenase (482 aa).

The protein belongs to the aromatic-ring hydroxylase family. KMO subfamily. The cofactor is FAD.

Its subcellular location is the mitochondrion outer membrane. The enzyme catalyses L-kynurenine + NADPH + O2 + H(+) = 3-hydroxy-L-kynurenine + NADP(+) + H2O. The protein operates within cofactor biosynthesis; NAD(+) biosynthesis; quinolinate from L-kynurenine: step 1/3. In terms of biological role, catalyzes the hydroxylation of L-kynurenine (L-Kyn) to form 3-hydroxy-L-kynurenine (L-3OHKyn). Required for synthesis of quinolinic acid. In Phaeosphaeria nodorum (strain SN15 / ATCC MYA-4574 / FGSC 10173) (Glume blotch fungus), this protein is Kynurenine 3-monooxygenase.